Reading from the N-terminus, the 585-residue chain is Glycerol-3-phosphate dehydrogenase (585 aa).

Residue 37–65 (DVVVIGGGVVGSGCALDAATRGLKVALVE) participates in FAD binding.

The protein belongs to the FAD-dependent glycerol-3-phosphate dehydrogenase family. It depends on FAD as a cofactor.

It localises to the cytoplasm. The catalysed reaction is a quinone + sn-glycerol 3-phosphate = dihydroxyacetone phosphate + a quinol. This chain is Glycerol-3-phosphate dehydrogenase (glpD), found in Mycobacterium leprae (strain TN).